We begin with the raw amino-acid sequence, 428 residues long: 26S proteasome regulatory subunit 7 (428 aa).

Residue 211–218 (GPPGTGKT) participates in ATP binding.

Belongs to the AAA ATPase family.

It is found in the cytoplasm. The protein localises to the nucleus. In terms of biological role, the 26S proteasome is involved in the ATP-dependent degradation of ubiquitinated proteins. The regulatory (or ATPase) complex confers ATP dependency and substrate specificity to the 26S complex. This Dictyostelium discoideum (Social amoeba) protein is 26S proteasome regulatory subunit 7 (psmC2).